A 395-amino-acid polypeptide reads, in one-letter code: Ankyrin repeat domain-containing protein 65 (395 aa).

ANK repeat units lie at residues 52–81 (QAWGHLLQAVWKGHTGLVTQLLRQGASVEE), 85–114 (AGRTPLHLAVLRGHVSLVRLLLQRGAQVGA), 118–147 (AGRTPLHEAAWHGPSRVAELLLRRGAPANA), 151–180 (AGLTPLHWAAALGRTLMVGHLLAAPHPGPT), 185–212 (RGWTAGHWAAAGGQMAVLELLGANGGAR), 213–241 (LDSVLLVAAAAGRATALRLLLAQGAPVDA), 245–274 (VGATVLGVAAGLGRRQDMEVLLEHGADPSL), 278–307 (HGRSALHRAAAGGHLLAVQLLAAWGAEVDS), 311–340 (LGLTPLHHAARGGHIEVTGHLLDRGAEINA), and 344–373 (LHKTPLHLAMEHGHGPTAELLLSRGASPTL).

The chain is Ankyrin repeat domain-containing protein 65 (ANKRD65) from Bos taurus (Bovine).